The sequence spans 1399 residues: Meiosis-specific protein ASY2 (1399 aa).

Residues 10 to 248 form the HORMA domain; the sequence is QQSLILTTEL…SQHHVLTVKV (239 aa). Acidic residues predominate over residues 257 to 266; that stretch reads PCEDENDNMQ. Disordered stretches follow at residues 257–281, 487–525, 617–656, 940–974, and 1045–1090; these read PCED…HDDQ, SKPK…SSEP, RLTG…AAPE, PPPP…VDQV, and DQDK…AAPK. The span at 267–281 shows a compositional bias: basic and acidic residues; the sequence is DDERSKGPDSLHDDQ. Pro residues predominate over residues 509-523; sequence SAPPSSEPKSAPPSS. A compositionally biased stretch (polar residues) spans 617 to 631; sequence RLTGNPSNEAQSSRS. Residues 1205–1246 adopt a coiled-coil conformation; it reads MASLRDAAEIHKAEMSSLNDEVKRLNSREADLQKEFSDLQVA.

Its subcellular location is the chromosome. It localises to the nucleus. Functionally, required for normal meiosis. The protein is Meiosis-specific protein ASY2 of Arabidopsis thaliana (Mouse-ear cress).